Reading from the N-terminus, the 262-residue chain is MSNDFDTIIKNIIKDSPAGELEEVYQDLITIAGENSKETIIDAIAEYNVENSIPIDVDGKDVIISKYNKQGTKFVDPVNGIQFSVDHLHQKGLDVEEYSADIDADQKKAITDLGNYLSTNFPGRATFAVLPLEEQSKTAIIIVSTKYNPSNFWNGHWKSEYVYDKTEGKLSGTIDIDVHYYEDGNVKFHSSKLVEETNIKDPVASIKELEHKFEQDLQESFTDLNEKQFKSLRRRLPITRARVNWGKAIGNYRLGRDAAQGK.

It belongs to the F-actin-capping protein alpha subunit family. In terms of assembly, heterodimer of an alpha and a beta subunit.

In terms of biological role, F-actin-capping proteins bind in a Ca(2+)-independent manner to the fast growing ends of actin filaments (barbed end) thereby blocking the exchange of subunits at these ends. Unlike other capping proteins (such as gelsolin and severin), these proteins do not sever actin filaments. In Candida glabrata (strain ATCC 2001 / BCRC 20586 / JCM 3761 / NBRC 0622 / NRRL Y-65 / CBS 138) (Yeast), this protein is F-actin-capping protein subunit alpha (CAP1).